Here is a 1215-residue protein sequence, read N- to C-terminus: Zinc finger E-box-binding homeobox 2 (1215 aa).

Residues 1-111 (MKQPIMADGP…ILQASVAGPE (111 aa)) form a disordered region. The segment covering 12–24 (CKRRKQANPRRKN) has biased composition (basic residues). Positions 57 to 74 (DQDTSPASMPNHESSPHM) are enriched in polar residues. A compositionally biased stretch (basic and acidic residues) spans 89-98 (RESVVEHSWH). Position 142 is a phosphoserine (Ser142). 3 C2H2-type zinc fingers span residues 211-234 (LTCP…KYRH), 241-263 (FSCP…MVTH), and 282-304 (FKCT…LRIH). Residues 310-334 (YECPNCKKRFSHSGSYSSHISSKKC) form a C2H2-type 4; atypical zinc finger. 3 positions are modified to phosphoserine: Ser356, Ser360, and Ser364. Lys377 carries the post-translational modification N6-acetyllysine. A Glycyl lysine isopeptide (Lys-Gly) (interchain with G-Cter in SUMO); alternate cross-link involves residue Lys391. Lys391 participates in a covalent cross-link: Glycyl lysine isopeptide (Lys-Gly) (interchain with G-Cter in SUMO2); alternate. Residues 437 to 487 (QHLGVGMEAPLLGFPTMNSNLSEVQKVLQIVDNTVSRQKMDCKTEDISKLK) form an SMAD-MH2 binding domain region. Residues Lys479 and Lys555 each participate in a glycyl lysine isopeptide (Lys-Gly) (interchain with G-Cter in SUMO2) cross-link. The C2H2-type 5; degenerate zinc finger occupies 581–605 (FSCQFCKESFPGPIPLHQHERYLCK). Glycyl lysine isopeptide (Lys-Gly) (interchain with G-Cter in SUMO2) cross-links involve residues Lys611 and Lys632. The segment at residues 644 to 703 (GLTSPINPYKDHMSVLKAYYAMNMEPNSDELLKISIAVGLPQEFVKEWFEQRKVYQYSNS) is a DNA-binding region (homeobox; atypical). At Ser647 the chain carries Phosphoserine. Disordered stretches follow at residues 702-740 (NSRS…DSIT) and 772-811 (VDKL…SEEL). Residue Lys713 forms a Glycyl lysine isopeptide (Lys-Gly) (interchain with G-Cter in SUMO2) linkage. Ser731 and Ser780 each carry phosphoserine. Over residues 780 to 808 (SNTPSPLNLSSTSSKNSHSSSYTPNSFSS) the composition is skewed to low complexity. Thr782 is subject to Phosphothreonine. Phosphoserine is present on Ser784. Lys866 is covalently cross-linked (Glycyl lysine isopeptide (Lys-Gly) (interchain with G-Cter in SUMO); alternate). Residue Lys866 forms a Glycyl lysine isopeptide (Lys-Gly) (interchain with G-Cter in SUMO2); alternate linkage. C2H2-type zinc fingers lie at residues 999–1021 (YACD…KYEH) and 1027–1049 (HQCQ…SRLH). Residues 1055 to 1076 (YQCDKCGKRFSHSGSYSQHMNH) form a C2H2-type 8; atypical zinc finger. A disordered region spans residues 1117 to 1215 (TPQGYSDSEE…EEDNMEDGME (99 aa)). Phosphoserine is present on residues Ser1122 and Ser1124. The segment covering 1127–1149 (RESMPRDGESEKEHEKEGEEGYG) has biased composition (basic and acidic residues). Acidic residues predominate over residues 1157–1167 (DEEEEEEEEES). 2 stretches are compositionally biased toward basic and acidic residues: residues 1168 to 1179 (ENKSMDTDPETI) and 1186 to 1205 (GDHS…KSDH). The residue at position 1203 (Ser1203) is a Phosphoserine. A compositionally biased stretch (acidic residues) spans 1206–1215 (EEDNMEDGME).

The protein belongs to the delta-EF1/ZFH-1 C2H2-type zinc-finger family. As to quaternary structure, interacts with CBX4 and CTBP1. Binds activated SMAD1, activated SMAD2 and activated SMAD3; binding with SMAD4 is not detected. Sumoylation on Lys-391 and Lys-866 is promoted by the E3 SUMO-protein ligase CBX4, and impairs interaction with CTBP1 and transcription repression activity.

It localises to the nucleus. It is found in the chromosome. In terms of biological role, transcriptional inhibitor that binds to DNA sequence 5'-CACCT-3' in different promoters. Represses transcription of E-cadherin. Represses expression of MEOX2. The polypeptide is Zinc finger E-box-binding homeobox 2 (Zeb2) (Mus musculus (Mouse)).